A 255-amino-acid polypeptide reads, in one-letter code: 5'-nucleotidase SurE (255 aa).

Residues aspartate 8, aspartate 9, serine 40, and asparagine 93 each contribute to the a divalent metal cation site.

This sequence belongs to the SurE nucleotidase family. It depends on a divalent metal cation as a cofactor.

It is found in the cytoplasm. It catalyses the reaction a ribonucleoside 5'-phosphate + H2O = a ribonucleoside + phosphate. In terms of biological role, nucleotidase that shows phosphatase activity on nucleoside 5'-monophosphates. This chain is 5'-nucleotidase SurE, found in Rhodopseudomonas palustris (strain BisB18).